The sequence spans 366 residues: Cobalt-precorrin-5B C(1)-methyltransferase (366 aa).

The protein belongs to the CbiD family.

The catalysed reaction is Co-precorrin-5B + S-adenosyl-L-methionine = Co-precorrin-6A + S-adenosyl-L-homocysteine. It functions in the pathway cofactor biosynthesis; adenosylcobalamin biosynthesis; cob(II)yrinate a,c-diamide from sirohydrochlorin (anaerobic route): step 6/10. Functionally, catalyzes the methylation of C-1 in cobalt-precorrin-5B to form cobalt-precorrin-6A. In Pseudomonas paraeruginosa (strain DSM 24068 / PA7) (Pseudomonas aeruginosa (strain PA7)), this protein is Cobalt-precorrin-5B C(1)-methyltransferase.